The chain runs to 294 residues: Putative inactive magnesium transporter MRS2-8 (294 aa).

Positions 179-216 (KLKSSMTRLTAQVQKIKDELEQLLEDDEDMAELYLSRK) form a coiled coil.

This sequence belongs to the CorA metal ion transporter (MIT) (TC 1.A.35.5) family.

The sequence is that of Putative inactive magnesium transporter MRS2-8 (MRS2-8) from Arabidopsis thaliana (Mouse-ear cress).